Reading from the N-terminus, the 145-residue chain is Hemoglobin subunit beta-1 (145 aa).

One can recognise a Globin domain in the interval threonine 1–histidine 145. Heme b contacts are provided by histidine 62 and histidine 91.

This sequence belongs to the globin family. As to quaternary structure, major hemoglobin is a tetramer of two alpha-1 chains and two beta-1 chains. Red blood cells.

In terms of biological role, involved in oxygen transport from the lung to the various peripheral tissues. The sequence is that of Hemoglobin subunit beta-1 (HBB1) from Triturus cristatus (Great crested newt).